Reading from the N-terminus, the 199-residue chain is Pyridoxal 5'-phosphate synthase subunit PdxT (199 aa).

L-glutamine is bound at residue 49-51; sequence GES. The active-site Nucleophile is cysteine 81. Residues arginine 110 and 139–140 each bind L-glutamine; that span reads IR. Catalysis depends on charge relay system residues histidine 175 and glutamate 177.

It belongs to the glutaminase PdxT/SNO family. As to quaternary structure, in the presence of PdxS, forms a dodecamer of heterodimers. Only shows activity in the heterodimer.

The catalysed reaction is aldehydo-D-ribose 5-phosphate + D-glyceraldehyde 3-phosphate + L-glutamine = pyridoxal 5'-phosphate + L-glutamate + phosphate + 3 H2O + H(+). It carries out the reaction L-glutamine + H2O = L-glutamate + NH4(+). The protein operates within cofactor biosynthesis; pyridoxal 5'-phosphate biosynthesis. Catalyzes the hydrolysis of glutamine to glutamate and ammonia as part of the biosynthesis of pyridoxal 5'-phosphate. The resulting ammonia molecule is channeled to the active site of PdxS. The sequence is that of Pyridoxal 5'-phosphate synthase subunit PdxT from Frankia alni (strain DSM 45986 / CECT 9034 / ACN14a).